A 98-amino-acid polypeptide reads, in one-letter code: Aspartyl/glutamyl-tRNA(Asn/Gln) amidotransferase subunit C (98 aa).

The protein belongs to the GatC family. Heterotrimer of A, B and C subunits.

The enzyme catalyses L-glutamyl-tRNA(Gln) + L-glutamine + ATP + H2O = L-glutaminyl-tRNA(Gln) + L-glutamate + ADP + phosphate + H(+). It catalyses the reaction L-aspartyl-tRNA(Asn) + L-glutamine + ATP + H2O = L-asparaginyl-tRNA(Asn) + L-glutamate + ADP + phosphate + 2 H(+). Its function is as follows. Allows the formation of correctly charged Asn-tRNA(Asn) or Gln-tRNA(Gln) through the transamidation of misacylated Asp-tRNA(Asn) or Glu-tRNA(Gln) in organisms which lack either or both of asparaginyl-tRNA or glutaminyl-tRNA synthetases. The reaction takes place in the presence of glutamine and ATP through an activated phospho-Asp-tRNA(Asn) or phospho-Glu-tRNA(Gln). This Paenarthrobacter aurescens (strain TC1) protein is Aspartyl/glutamyl-tRNA(Asn/Gln) amidotransferase subunit C.